A 310-amino-acid polypeptide reads, in one-letter code: Vomeronasal type-1 receptor 47 (310 aa).

Over Met-1 to Thr-16 the chain is Extracellular. A helical membrane pass occupies residues Phe-17–Ile-37. Topologically, residues Lys-38 to Asp-49 are cytoplasmic. The helical transmembrane segment at Leu-50–Ala-70 threads the bilayer. Topologically, residues Thr-71 to Leu-91 are extracellular. Cys-85 and Cys-172 are disulfide-bonded. A helical membrane pass occupies residues Tyr-92–Leu-114. The Cytoplasmic portion of the chain corresponds to Ser-115–Asn-131. A helical transmembrane segment spans residues Ile-132–Ile-152. The Extracellular portion of the chain corresponds to Ser-153–Glu-193. N-linked (GlcNAc...) asparagine glycosylation is present at Asn-159. Residues Val-194 to His-214 traverse the membrane as a helical segment. At Arg-215–Gln-238 the chain is on the cytoplasmic side. A helical transmembrane segment spans residues Thr-239 to Ser-259. Topologically, residues Ser-260–Thr-269 are extracellular. A helical membrane pass occupies residues Cys-270–Met-290. Residues Ser-291 to Met-310 are Cytoplasmic-facing.

It belongs to the G-protein coupled receptor 1 family.

Its subcellular location is the cell membrane. Functionally, putative pheromone receptor implicated in the regulation of social and reproductive behavior. The protein is Vomeronasal type-1 receptor 47 (Vmn1r47) of Mus musculus (Mouse).